Reading from the N-terminus, the 400-residue chain is Nicotinate phosphoribosyltransferase (400 aa).

A Phosphohistidine; by autocatalysis modification is found at His-220.

The protein belongs to the NAPRTase family. In terms of processing, transiently phosphorylated on a His residue during the reaction cycle. Phosphorylation strongly increases the affinity for substrates and increases the rate of nicotinate D-ribonucleotide production. Dephosphorylation regenerates the low-affinity form of the enzyme, leading to product release.

The catalysed reaction is nicotinate + 5-phospho-alpha-D-ribose 1-diphosphate + ATP + H2O = nicotinate beta-D-ribonucleotide + ADP + phosphate + diphosphate. The protein operates within cofactor biosynthesis; NAD(+) biosynthesis; nicotinate D-ribonucleotide from nicotinate: step 1/1. In terms of biological role, catalyzes the synthesis of beta-nicotinate D-ribonucleotide from nicotinate and 5-phospho-D-ribose 1-phosphate at the expense of ATP. This chain is Nicotinate phosphoribosyltransferase, found in Shigella dysenteriae serotype 1 (strain Sd197).